The chain runs to 432 residues: uncharacterized protein (432 aa).

SIS domains are found at residues 105–244 and 277–422; these read WLTE…DLVS and CDKK…VDLP.

This is an uncharacterized protein from Saccharomyces cerevisiae (strain ATCC 204508 / S288c) (Baker's yeast).